The chain runs to 1368 residues: DNA-directed RNA polymerase subunit beta (1368 aa).

The protein belongs to the RNA polymerase beta chain family. As to quaternary structure, the RNAP catalytic core consists of 2 alpha, 1 beta, 1 beta' and 1 omega subunit. When a sigma factor is associated with the core the holoenzyme is formed, which can initiate transcription.

The enzyme catalyses RNA(n) + a ribonucleoside 5'-triphosphate = RNA(n+1) + diphosphate. Its function is as follows. DNA-dependent RNA polymerase catalyzes the transcription of DNA into RNA using the four ribonucleoside triphosphates as substrates. In Burkholderia thailandensis (strain ATCC 700388 / DSM 13276 / CCUG 48851 / CIP 106301 / E264), this protein is DNA-directed RNA polymerase subunit beta.